The sequence spans 233 residues: MKSAVLVFPGINRERDMARALKLVSGHDAAMVWHADTELPNGTDLVVVPGGFSYGDYLRCGAIAARAPVMDAVRKFASDGGLVLGVCNGFQILCESGLLPGVLMRNARLKFICRDVHLRVERNDSPFTRGYAAGQVIKVPVAHGEGNYEADEETVKRLEGDGRVLYRYCSPEGEIGESHNINGAAASIAGIVSERGNVLGMMPHPENHVEDIMGCTDGRGLFAGLVEHLKTAA.

The region spanning 3-233 (SAVLVFPGIN…GLVEHLKTAA (231 aa)) is the Glutamine amidotransferase type-1 domain. Cys-87 acts as the Nucleophile in catalysis. Active-site residues include His-204 and Glu-206.

Part of the FGAM synthase complex composed of 1 PurL, 1 PurQ and 2 PurS subunits.

The protein resides in the cytoplasm. The enzyme catalyses N(2)-formyl-N(1)-(5-phospho-beta-D-ribosyl)glycinamide + L-glutamine + ATP + H2O = 2-formamido-N(1)-(5-O-phospho-beta-D-ribosyl)acetamidine + L-glutamate + ADP + phosphate + H(+). It catalyses the reaction L-glutamine + H2O = L-glutamate + NH4(+). It participates in purine metabolism; IMP biosynthesis via de novo pathway; 5-amino-1-(5-phospho-D-ribosyl)imidazole from N(2)-formyl-N(1)-(5-phospho-D-ribosyl)glycinamide: step 1/2. Its function is as follows. Part of the phosphoribosylformylglycinamidine synthase complex involved in the purines biosynthetic pathway. Catalyzes the ATP-dependent conversion of formylglycinamide ribonucleotide (FGAR) and glutamine to yield formylglycinamidine ribonucleotide (FGAM) and glutamate. The FGAM synthase complex is composed of three subunits. PurQ produces an ammonia molecule by converting glutamine to glutamate. PurL transfers the ammonia molecule to FGAR to form FGAM in an ATP-dependent manner. PurS interacts with PurQ and PurL and is thought to assist in the transfer of the ammonia molecule from PurQ to PurL. The protein is Phosphoribosylformylglycinamidine synthase subunit PurQ of Rhodopseudomonas palustris (strain HaA2).